The chain runs to 215 residues: Large ribosomal subunit protein uL1 (215 aa).

The protein belongs to the universal ribosomal protein uL1 family. As to quaternary structure, part of the 50S ribosomal subunit.

Its function is as follows. Binds directly to 23S rRNA. Probably involved in E site tRNA release. Functionally, protein L1 is also a translational repressor protein, it controls the translation of its operon by binding to its mRNA. The sequence is that of Large ribosomal subunit protein uL1 from Methanospirillum hungatei JF-1 (strain ATCC 27890 / DSM 864 / NBRC 100397 / JF-1).